The following is a 563-amino-acid chain: ATP-dependent RNA helicase DeaD (563 aa).

The short motif at 13–41 is the Q motif element; sequence ATFADLQIHPRVLRAIGDVGYESPTAIQA. Residues 44-215 form the Helicase ATP-binding domain; sequence IPALMAGSDV…AKYLHDPFEV (172 aa). Position 57–64 (57–64) interacts with ATP; the sequence is AQTGTGKT. The DEAD box motif lies at 163-166; sequence DEAD. A Helicase C-terminal domain is found at 226–385; the sequence is NISQSYIQVA…AQLPTVEDVN (160 aa). Disordered stretches follow at residues 441 to 470 and 543 to 563; these read LMAPDPPLSRRNRDQRRDRPQRPKRRPDLT and YRPPDAARRHNGGKPRRKHVG. Over residues 451–461 the composition is skewed to basic and acidic residues; it reads RNRDQRRDRPQ. The span at 551–563 shows a compositional bias: basic residues; the sequence is RHNGGKPRRKHVG.

Belongs to the DEAD box helicase family. DeaD/CsdA subfamily.

The protein resides in the cytoplasm. The enzyme catalyses ATP + H2O = ADP + phosphate + H(+). Its function is as follows. DEAD-box RNA helicase involved in various cellular processes at low temperature, including ribosome biogenesis, mRNA degradation and translation initiation. This Mycobacterium tuberculosis (strain CDC 1551 / Oshkosh) protein is ATP-dependent RNA helicase DeaD.